Here is a 519-residue protein sequence, read N- to C-terminus: FAD-dependent monooxygenase macF (519 aa).

Residues 1 to 20 (MTKMTSIIGILMGVLTTATA) form the signal peptide. One can recognise an FAD-binding PCMH-type domain in the interval 88–262 (CRLNASCIVT…TEYDLTTNTG (175 aa)). A Pros-8alpha-FAD histidine modification is found at H125.

It belongs to the oxygen-dependent FAD-linked oxidoreductase family.

It participates in secondary metabolite biosynthesis; terpenoid biosynthesis. Its function is as follows. FAD-dependent monooxygenase; part of the gene cluster that mediates the biosynthesis of macrophorins, isoprenoid epoxycyclohexenones containing cyclized drimane moieties. The first step of the pathway is the synthesis of 6-methylsalicylic acid (6-MSA) by the polyketide synthase macA. 6-MSA is then converted to m-cresol by the decarboxylase macB. The cytochrome P450 monooxygenase macC then catalyzes the oxidation of m-cresol to toluquinol. Epoxidation of toluquinol is then performed by the short chain dehydrogenase macD, with the help of macE, and a further prenylation by macG leads to 7-deacetoxyyanuthone A. The next step is the hydroxylation of C-22 of 7-deacetoxyyanuthone A by the cytochrome P450 monooxygenase macH to yield 22-deacetylyanuthone A. O-Mevalon transferase macI then attaches mevalon to the hydroxyl group of 22-deacetylyanuthone A to produce yanuthone E. The terpene cyclase macJ catalyzes the cyclization of 22-deacetylyanuthone A to macrophorin A. MacJ is also able to catalyze cyclization of yanuthone E and 7-deacetoxyyanuthone A to their corresponding macrophorins. The macJ products can be further modified by macH and macJ, as well as by the FAD-dependent monooxygenase macF, to produce additional macrophorins, including 4'-oxomacrophorin A, 4'-oxomacrophorin D and 4'-oxomacrophorin E. The sequence is that of FAD-dependent monooxygenase macF from Penicillium terrestre.